We begin with the raw amino-acid sequence, 777 residues long: MTNNNDPSLQAQSLRDQLNDWSYRYYVQDDPAVPDAEYDRVFRALKDLEAQYPDLVTADSPTQRVGDVPLDAFEQVQHEVPMLSLDNAFDDEELWAFDKRIRERLDVSEIIDYVAEPKLDGLAVSLLYENGELVRAATRGDGQTGENITVNARTIRSVPLKLRGNDVPKRLEVRGEVVMPHAGFEELNARQQEAGLKLFANPRNAAAGSLRQLDSRITASRPLEFYAYSMAQLEGWEHPPTHSAMLDALRDWGLRVNPEIRVCHGVEALLRFYQGILEKREHLDYDIDGVVYKVNRFDWQDDLGFVSRAPRWAIAHKFPAQEELTVLNGVDWQVGRTGALTPVARLEPVHVGGVIVSNATLHNIDEIQRLDIRIGDTVVVYRAGDVIPKVVRALPERRPANAQGIALPSSCPVCGSEILRGHDQVVARCTGGLICGDQRREAIKHFASRRAMDIDGLGDKLVDALVDQELITTVADLYRLKAEQVAGLERMGEKSADNLIAALEASKTVGLGRFLFALGILQIGEETAKNLADCFGDLDSIRHAPLLLLLAVPDVGLEVAKAIGAFFAESDNEAVIDGLLAQGVSPQASGVPSAAFVKSLTLAQLLKSAKRLGMNLEGIGDKSLDILGSHFRTVTELSAAAAEGAGAEPKGVRSGVMTQLAKALAENDWRGRLQDAEKKVADMAARAPQEMESQPLEGQTWVLTGTLEQFTRNQAKQALQQLGAKVAGSVSKNTRMVVAGASAGSKLAKAESLGIEVCDEAALLSLLNQHGIDPGAL.

Residues 35-39 (DAEYD), 84-85 (SL), and glutamate 116 contribute to the NAD(+) site. Residue lysine 118 is the N6-AMP-lysine intermediate of the active site. 4 residues coordinate NAD(+): arginine 139, glutamate 176, lysine 293, and lysine 317. Cysteine 411, cysteine 414, cysteine 429, and cysteine 435 together coordinate Zn(2+). The region spanning 691-777 (MESQPLEGQT…NQHGIDPGAL (87 aa)) is the BRCT domain.

The protein belongs to the NAD-dependent DNA ligase family. LigA subfamily. Mg(2+) is required as a cofactor. It depends on Mn(2+) as a cofactor.

The catalysed reaction is NAD(+) + (deoxyribonucleotide)n-3'-hydroxyl + 5'-phospho-(deoxyribonucleotide)m = (deoxyribonucleotide)n+m + AMP + beta-nicotinamide D-nucleotide.. Its function is as follows. DNA ligase that catalyzes the formation of phosphodiester linkages between 5'-phosphoryl and 3'-hydroxyl groups in double-stranded DNA using NAD as a coenzyme and as the energy source for the reaction. It is essential for DNA replication and repair of damaged DNA. The chain is DNA ligase from Alcanivorax borkumensis (strain ATCC 700651 / DSM 11573 / NCIMB 13689 / SK2).